A 383-amino-acid polypeptide reads, in one-letter code: Chaperone protein DnaJ (383 aa).

The 66-residue stretch at 5–70 folds into the J domain; that stretch reads DYYDVLGVSK…DKKAAYDRYG (66 aa). A CR-type zinc finger spans residues 142-220; the sequence is GMQKTISVPG…CRGAGREEKT (79 aa). Zn(2+) contacts are provided by Cys-155, Cys-158, Cys-172, Cys-175, Cys-194, Cys-197, Cys-208, and Cys-211. 4 CXXCXGXG motif repeats span residues 155–162, 172–179, 194–201, and 208–215; these read CSACEGTG, CPTCSGMG, and CQACRGAG.

The protein belongs to the DnaJ family. In terms of assembly, homodimer. Requires Zn(2+) as cofactor.

The protein localises to the cytoplasm. In terms of biological role, participates actively in the response to hyperosmotic and heat shock by preventing the aggregation of stress-denatured proteins and by disaggregating proteins, also in an autonomous, DnaK-independent fashion. Unfolded proteins bind initially to DnaJ; upon interaction with the DnaJ-bound protein, DnaK hydrolyzes its bound ATP, resulting in the formation of a stable complex. GrpE releases ADP from DnaK; ATP binding to DnaK triggers the release of the substrate protein, thus completing the reaction cycle. Several rounds of ATP-dependent interactions between DnaJ, DnaK and GrpE are required for fully efficient folding. Also involved, together with DnaK and GrpE, in the DNA replication of plasmids through activation of initiation proteins. The sequence is that of Chaperone protein DnaJ from Dinoroseobacter shibae (strain DSM 16493 / NCIMB 14021 / DFL 12).